The following is a 102-amino-acid chain: ATP-dependent Clp protease adapter protein ClpS (102 aa).

The protein belongs to the ClpS family. Binds to the N-terminal domain of the chaperone ClpA.

Its function is as follows. Involved in the modulation of the specificity of the ClpAP-mediated ATP-dependent protein degradation. The protein is ATP-dependent Clp protease adapter protein ClpS of Nitrosospira multiformis (strain ATCC 25196 / NCIMB 11849 / C 71).